The primary structure comprises 441 residues: Bacteria-responsive protein 1 (441 aa).

The first 18 residues, Met-1–Ala-18, serve as a signal peptide directing secretion. Residue Asn-20 is glycosylated (N-linked (GlcNAc...) asparagine). Residues Pro-25–Leu-441 form the GH18 domain. A disulfide bridge links Cys-29 with Cys-56. The N-linked (GlcNAc...) asparagine glycan is linked to Asn-225.

Belongs to the glycosyl hydrolase 18 family. IDGF subfamily. Salivary gland (at protein level).

The protein resides in the secreted. Promotes recruitment of host neutrophils at the bite site. Induces expression of IL1B and IL6 in the skin of the host. In terms of biological role, (Microbial infection) Enhances Zika virus replication and exacerbates disease pathogenesis in the host. The chain is Bacteria-responsive protein 1 from Aedes aegypti (Yellowfever mosquito).